The primary structure comprises 301 residues: Recombination-associated protein RdgC (301 aa).

The protein belongs to the RdgC family.

The protein localises to the cytoplasm. Its subcellular location is the nucleoid. Its function is as follows. May be involved in recombination. In Xanthomonas oryzae pv. oryzae (strain KACC10331 / KXO85), this protein is Recombination-associated protein RdgC.